The following is a 159-amino-acid chain: Ribonuclease P protein component 2 (159 aa).

The protein belongs to the eukaryotic/archaeal RNase P protein component 2 family. In terms of assembly, consists of a catalytic RNA component and at least 4-5 protein subunits.

The protein localises to the cytoplasm. The catalysed reaction is Endonucleolytic cleavage of RNA, removing 5'-extranucleotides from tRNA precursor.. Functionally, part of ribonuclease P, a protein complex that generates mature tRNA molecules by cleaving their 5'-ends. In Halorubrum lacusprofundi (strain ATCC 49239 / DSM 5036 / JCM 8891 / ACAM 34), this protein is Ribonuclease P protein component 2.